A 122-amino-acid chain; its full sequence is Ribosomal protein eL22-like 1 (122 aa).

Phosphoserine is present on residues Ser112, Ser118, and Ser120.

The protein belongs to the eukaryotic ribosomal protein eL22 family.

The protein is Ribosomal protein eL22-like 1 (Rpl22l1) of Mus musculus (Mouse).